Consider the following 521-residue polypeptide: MQTSGLTLEPPGVASPATLAVAAVTFLTALVLYELFTYRKRRSMPPGPFRWPFIGNTLQIPQVHPWLTYSRWAQVYGDILHLDALGQHIIVINSAKIARELLDKRSAIYSGRPHLVMAGDLAGQDRLLILQPYGDEFRQQRRFISQDLSVAAVRRYYDIQEAAARRLVLGVINDPGSLESQIKVNIASIIMLVTYGYTVKGTDDPFITRPFEVMDNFNASMTPGVWIVDMIPQLKYLPLWTPGATFLKTAKVWRKHLFTTNWMVYSWSKESSENGTARVPNLCASVLTEMEGKVTPQLEESLMWAAGTVLGGGLDTNISTILSFILAMLRFPDVQRKAQVEIDAVVGSERLPEISDRPSLPYIRSVVTEVYRWLPAIPLCIPHALTEDDVYNGVFLPKGSVVMPNVWHMLHDPTIYPDPDAFKPERYGGLDSEMKKVTDLAFGFGRRACPGYQFAQGTIFTIVATMLATCDIVPVVDEHGQNSIPDVGYTTGTIIFPVDVKCTFRPRTEQARAALVEASVL.

Residues 12-32 (GVASPATLAVAAVTFLTALVL) traverse the membrane as a helical segment. N-linked (GlcNAc...) asparagine glycosylation is found at Asn-218, Asn-274, and Asn-317. Cys-449 provides a ligand contact to heme.

The protein belongs to the cytochrome P450 family. Requires heme as cofactor.

The protein localises to the membrane. Its pathway is secondary metabolite biosynthesis. Functionally, cytochrome P450 monooxygenase that is able to use anthracene, carbazole, pyrene, phenanthrene and trans-stilbene as substrates for oxidation. These multifunctional properties against a series of polycyclic aromatic hydrocarbons (PAHs) suggest that CYP105 would play important roles, at least in part, in fungal metabolic systems involved in xenobiotic detoxification. This is Cytochrome P450 monooxygenase 105 from Postia placenta (strain ATCC 44394 / Madison 698-R) (Brown rot fungus).